The chain runs to 502 residues: Protein ANKUB1 (502 aa).

This is Protein ANKUB1 (ANKUB1) from Homo sapiens (Human).